A 188-amino-acid polypeptide reads, in one-letter code: Peptidyl-tRNA hydrolase (188 aa).

Y16 provides a ligand contact to tRNA. Residue H21 is the Proton acceptor of the active site. 3 residues coordinate tRNA: F66, N68, and N114.

This sequence belongs to the PTH family. Monomer.

It localises to the cytoplasm. The enzyme catalyses an N-acyl-L-alpha-aminoacyl-tRNA + H2O = an N-acyl-L-amino acid + a tRNA + H(+). Hydrolyzes ribosome-free peptidyl-tRNAs (with 1 or more amino acids incorporated), which drop off the ribosome during protein synthesis, or as a result of ribosome stalling. Its function is as follows. Catalyzes the release of premature peptidyl moieties from peptidyl-tRNA molecules trapped in stalled 50S ribosomal subunits, and thus maintains levels of free tRNAs and 50S ribosomes. This chain is Peptidyl-tRNA hydrolase, found in Geobacter sp. (strain M21).